Consider the following 516-residue polypeptide: MDQLMNFSLTSPIFLLLSSLFLIILLNKLMRGNKIQKGKKLPPGPKKIAIIGNLPSNGRFTSLIVFLNNLAEKYGPIMHLRIGQLSAVIISSAEKAKEILNTHGVRVADRPQTTVAKIMLYNSLGVTFAPYGDYLKQLRQIYAMELLSPKTVKSFWTIMDDELSTMITSIKSEVGQPMILHDKMMTYLYAMLCRATVGSVCNGRETLIMAAKETSALSASIRIEDLFPSVKILPVISGLKSKLTNLLKELDIVLEDIISAREKKLLSQPQQPLMLDEEDMLGVLLKYKNGKGNDTKFRVTNNDIKAIVFELILAGTLSSAAIVEWCMSELMKNPELLKKAQDEVRQVLKGKKTISGSDVGKLEYVKMVVKESVRLHPPAPLLFPRECREEFEIDGMTIPKKSWVIINYWAIGRDPKIWPNADKFEPERFSNNNIDFYGSNFELIPFGAGRRVCPGILFGTTNVELLLAAFLFHFDWELPGGMKPEELDMNELFGAGCIRENPLCLIPSISTVVEGN.

A helical membrane pass occupies residues 6–26 (NFSLTSPIFLLLSSLFLIILL). Position 453 (cysteine 453) interacts with heme.

The protein belongs to the cytochrome P450 family. Heme serves as cofactor. As to expression, highly expressed in stems. Expressed at low levels in roots.

It is found in the endoplasmic reticulum membrane. The catalysed reaction is tetrahydroalstonine + A + reduced [NADPH--hemoprotein reductase] + O2 = alstonine + AH2 + oxidized [NADPH--hemoprotein reductase] + 2 H2O + H(+). It catalyses the reaction ajmalicine + A + reduced [NADPH--hemoprotein reductase] + O2 = serpentine + AH2 + oxidized [NADPH--hemoprotein reductase] + 2 H2O + H(+). It participates in alkaloid biosynthesis. Its function is as follows. Involved in monoterpene indole alkaloids (MIAs) biosynthesis. Converts by aromatization the tetrahydro-beta-carboline alkaloids tetrahydroalstonine and ajmalicine to the corresponding beta-carboline alkaloids alstonine and serpentine, respectively. This chain is Alstonine synthase, found in Catharanthus roseus (Madagascar periwinkle).